Reading from the N-terminus, the 107-residue chain is Ig kappa chain V-VI region J539 (107 aa).

The tract at residues 1–23 is framework-1; it reads EIVLTQSPAITAASLGQKVTITC. Cys-23 and Cys-87 are oxidised to a cystine. Positions 24-33 are complementarity-determining-1; sequence SASSSVSSLH. The segment at 34–48 is framework-2; the sequence is WYQQKSGTSPKPWIY. A complementarity-determining-2 region spans residues 49 to 55; that stretch reads EISKLAS. A framework-3 region spans residues 56-87; sequence GVPARFSGSGSGTSYSLTINTMEAEDAAIYYC. The complementarity-determining-3 stretch occupies residues 88–96; the sequence is QQWTYPLIT. A framework-4 region spans residues 97–106; it reads FGAGTKLELK.

In Mus musculus (Mouse), this protein is Ig kappa chain V-VI region J539.